The chain runs to 201 residues: Superoxide dismutase [Mn/Fe] (201 aa).

Fe(3+) contacts are provided by histidine 27, histidine 75, aspartate 161, and histidine 165. Mn(2+) is bound by residues histidine 27, histidine 75, aspartate 161, and histidine 165.

Belongs to the iron/manganese superoxide dismutase family. As to quaternary structure, homotetramer. The cofactor is Mn(2+). Requires Fe(3+) as cofactor.

The catalysed reaction is 2 superoxide + 2 H(+) = H2O2 + O2. Shows decreasing activity with increasing pH. Slightly inhibited by azide and fluoride at pH 7-8; the inhibition is drastically increased towards lower pH. In terms of biological role, destroys superoxide anion radicals which are normally produced within the cells and which are toxic to biological systems. Catalyzes the dismutation of superoxide anion radicals into O2 and H2O2 by successive reduction and oxidation of the transition metal ion at the active site. This is Superoxide dismutase [Mn/Fe] (sodA) from Propionibacterium freudenreichii subsp. shermanii.